The chain runs to 125 residues: Small ribosomal subunit protein uS13 (125 aa).

Residues 95–125 are disordered; the sequence is GLPVNGQRTRTNARTRKGVKKTVANKKKATK. The segment covering 105–125 has biased composition (basic residues); sequence TNARTRKGVKKTVANKKKATK.

This sequence belongs to the universal ribosomal protein uS13 family. Part of the 30S ribosomal subunit. Forms a loose heterodimer with protein S19. Forms two bridges to the 50S subunit in the 70S ribosome.

Functionally, located at the top of the head of the 30S subunit, it contacts several helices of the 16S rRNA. In the 70S ribosome it contacts the 23S rRNA (bridge B1a) and protein L5 of the 50S subunit (bridge B1b), connecting the 2 subunits; these bridges are implicated in subunit movement. Contacts the tRNAs in the A and P-sites. In Leptospira biflexa serovar Patoc (strain Patoc 1 / Ames), this protein is Small ribosomal subunit protein uS13.